The sequence spans 811 residues: U-box domain-containing protein 43 (811 aa).

Positions 24–103 (NIYEAFICPL…EEWRARNDAL (80 aa)) constitute a U-box domain. ARM repeat units follow at residues 136-175 (RKIR…VVVE), 178-217 (EESK…ELSK), 220-261 (ALCE…NLER), 263-302 (EENV…VLAL), 303-342 (NNDV…NISS), 344-388 (EGSA…NIVN), 399-438 (GPHH…GLTS), 444-484 (INVV…NISP), and 489-528 (ELAN…LLAE).

It catalyses the reaction S-ubiquitinyl-[E2 ubiquitin-conjugating enzyme]-L-cysteine + [acceptor protein]-L-lysine = [E2 ubiquitin-conjugating enzyme]-L-cysteine + N(6)-ubiquitinyl-[acceptor protein]-L-lysine.. Its pathway is protein modification; protein ubiquitination. Its function is as follows. Functions as an E3 ubiquitin ligase. The polypeptide is U-box domain-containing protein 43 (PUB43) (Arabidopsis thaliana (Mouse-ear cress)).